The chain runs to 675 residues: Cytoplasmic tyrosine-protein kinase BMX (675 aa).

Residues 4-111 enclose the PH domain; sequence KSILEELLLK…WLKALQKEIR (108 aa). The Btk-type zinc-finger motif lies at 113 to 149; sequence NPHLLVKYHSGFFVDGKFLCCQQSCKAAPGCTLWEAY. 4 residues coordinate Zn(2+): histidine 121, cysteine 132, cysteine 133, and cysteine 143. Tyrosine 216 and tyrosine 224 each carry phosphotyrosine; by autocatalysis. An SH2 domain is found at 296 to 392; it reads WFAGNISRSQ…GMITRLRHPV (97 aa). The region spanning 417-675 is the Protein kinase domain; the sequence is ITLLKELGSG…IEPLREKDKH (259 aa). ATP-binding positions include 423-431 and lysine 445; that span reads LGSGQFGVV. Aspartate 536 serves as the catalytic Proton acceptor. Tyrosine 566 bears the Phosphotyrosine; by SRC and autocatalysis mark. A CAV1-binding motif is present at residues 596-603; that stretch reads WAFGILMW.

Belongs to the protein kinase superfamily. Tyr protein kinase family. TEC subfamily. In terms of assembly, interacts with BCAR1, CAV1, MYD88, PTK2/FAK1, RUFY1, RUFY2, STAT3, TIRAP and TNFRSF1B. Requires Zn(2+) as cofactor. Phosphorylated in response to protein I/II and to LPS. Phosphorylation at Tyr-566 by SRC and by autocatalysis leads to activation and is required for STAT3 phosphorylation by BMX. As to expression, highly expressed in cells with great migratory potential, including endothelial cells and metastatic carcinoma cell lines.

The protein resides in the cytoplasm. It catalyses the reaction L-tyrosyl-[protein] + ATP = O-phospho-L-tyrosyl-[protein] + ADP + H(+). With respect to regulation, TEK and vascular endothelial growth factor receptor 1 (FLT1) stimulate BMX tyrosine kinase activity. Activated by integrins through the mediation of PTK2/FAK1. Activated by TNF through the mediation of TNFRSF1B. Its function is as follows. Non-receptor tyrosine kinase that plays central but diverse modulatory roles in various signaling processes involved in the regulation of actin reorganization, cell migration, cell proliferation and survival, cell adhesion, and apoptosis. Participates in signal transduction stimulated by growth factor receptors, cytokine receptors, G-protein coupled receptors, antigen receptors and integrins. Induces tyrosine phosphorylation of BCAR1 in response to integrin regulation. Activation of BMX by integrins is mediated by PTK2/FAK1, a key mediator of integrin signaling events leading to the regulation of actin cytoskeleton and cell motility. Plays a critical role in TNF-induced angiogenesis, and implicated in the signaling of TEK and FLT1 receptors, 2 important receptor families essential for angiogenesis. Required for the phosphorylation and activation of STAT3, a transcription factor involved in cell differentiation. Also involved in interleukin-6 (IL6) induced differentiation. Also plays a role in programming adaptive cytoprotection against extracellular stress in different cell systems, salivary epithelial cells, brain endothelial cells, and dermal fibroblasts. May be involved in regulation of endocytosis through its interaction with an endosomal protein RUFY1. May also play a role in the growth and differentiation of hematopoietic cells; as well as in signal transduction in endocardial and arterial endothelial cells. This Homo sapiens (Human) protein is Cytoplasmic tyrosine-protein kinase BMX (BMX).